Here is a 351-residue protein sequence, read N- to C-terminus: Holliday junction branch migration complex subunit RuvB (351 aa).

The interval Met1–Tyr189 is large ATPase domain (RuvB-L). Residues Leu28, Arg29, Gly70, Lys73, Thr74, Ser75, Glu136–Phe138, Arg179, Tyr189, and Arg226 contribute to the ATP site. Thr74 contacts Mg(2+). A small ATPAse domain (RuvB-S) region spans residues Glu190 to Asp260. The head domain (RuvB-H) stretch occupies residues Glu263 to Asp351. Arg318 and Arg323 together coordinate DNA.

The protein belongs to the RuvB family. Homohexamer. Forms an RuvA(8)-RuvB(12)-Holliday junction (HJ) complex. HJ DNA is sandwiched between 2 RuvA tetramers; dsDNA enters through RuvA and exits via RuvB. An RuvB hexamer assembles on each DNA strand where it exits the tetramer. Each RuvB hexamer is contacted by two RuvA subunits (via domain III) on 2 adjacent RuvB subunits; this complex drives branch migration. In the full resolvosome a probable DNA-RuvA(4)-RuvB(12)-RuvC(2) complex forms which resolves the HJ.

The protein resides in the cytoplasm. The catalysed reaction is ATP + H2O = ADP + phosphate + H(+). Its function is as follows. The RuvA-RuvB-RuvC complex processes Holliday junction (HJ) DNA during genetic recombination and DNA repair, while the RuvA-RuvB complex plays an important role in the rescue of blocked DNA replication forks via replication fork reversal (RFR). RuvA specifically binds to HJ cruciform DNA, conferring on it an open structure. The RuvB hexamer acts as an ATP-dependent pump, pulling dsDNA into and through the RuvAB complex. RuvB forms 2 homohexamers on either side of HJ DNA bound by 1 or 2 RuvA tetramers; 4 subunits per hexamer contact DNA at a time. Coordinated motions by a converter formed by DNA-disengaged RuvB subunits stimulates ATP hydrolysis and nucleotide exchange. Immobilization of the converter enables RuvB to convert the ATP-contained energy into a lever motion, pulling 2 nucleotides of DNA out of the RuvA tetramer per ATP hydrolyzed, thus driving DNA branch migration. The RuvB motors rotate together with the DNA substrate, which together with the progressing nucleotide cycle form the mechanistic basis for DNA recombination by continuous HJ branch migration. Branch migration allows RuvC to scan DNA until it finds its consensus sequence, where it cleaves and resolves cruciform DNA. The chain is Holliday junction branch migration complex subunit RuvB from Mycobacterium avium (strain 104).